Reading from the N-terminus, the 284-residue chain is Tropomyosin (284 aa).

Residues Met-1 to Tyr-284 adopt a coiled-coil conformation. Residues Arg-105–Glu-131 form a disordered region.

The protein belongs to the tropomyosin family. In terms of assembly, homodimer.

Its function is as follows. Tropomyosin, in association with the troponin complex, plays a central role in the calcium dependent regulation of muscle contraction. This Cornu aspersum (Brown garden snail) protein is Tropomyosin.